The sequence spans 311 residues: Aurora kinase (311 aa).

The region spanning 20 to 300 is the Protein kinase domain; sequence FEIGRFLGRG…IEDILRHPFL (281 aa). Lys49 serves as a coordination point for ATP. Asp143 (proton acceptor) is an active-site residue. The segment at 189-216 is activation loop; sequence DFGWSVHHPTHGGRRRTQCGTLDYLPPE. The residue at position 205 (Thr205) is a Phosphothreonine; by autocatalysis. The Destruction (D)-box signature appears at 280–299; sequence MLIRSPEARISIEDILRHPF.

The protein belongs to the protein kinase superfamily. Ser/Thr protein kinase family. Aurora subfamily. As to quaternary structure, interacts with EB1 (via C-terminal residues 101-238). In terms of processing, phosphorylated in mitosis and cytokinesis. Activated by autophosphorylation at Thr-205.

The protein resides in the nucleus. Its subcellular location is the cytoplasm. It localises to the cytoskeleton. It is found in the microtubule organizing center. The protein localises to the centrosome. The protein resides in the spindle. Its subcellular location is the spindle pole. It localises to the nucleus membrane. The enzyme catalyses L-seryl-[protein] + ATP = O-phospho-L-seryl-[protein] + ADP + H(+). It carries out the reaction L-threonyl-[protein] + ATP = O-phospho-L-threonyl-[protein] + ADP + H(+). Its activity is regulated as follows. Activated by cell-cycle phase specific phosphorylation. Inhibited by ATP-competitive inhibitors N-[4-[[6-Methoxy-7-[3-(4-morpholinyl)propoxy]-4-quinazolinyl]amino]phenyl]benzamide (ZM447439) and cyclopropanecarboxylic acid-(3-(4-(3-trifluoromethylphenylamino)-pyrimidin-2-ylamino)-phenyl)-amide (CFPPA). Inhibition leads to reduced growth, increased cytokinesis, microtubular defects, and increased ploidy of the cells. In terms of biological role, involved in regulation of the cell cycle. Required for mitotic cell division and cytokinesis. Based on its localization to centrosomes and spindle microtubules, as well as to various cytoskeletal components such as the median body, parental attachment disk, and anterior and posterior-lateral paraflagellar dense rods, may coordinate reorganization and segregation of tubulin-containing structures during mitosis and cytokinesis. May regulate microtubule disassembly by phosphorylating cytoskeletal proteins leading to their destabilization. Phosphorylates EB1 at 'Ser-148' in vitro. Phosphorylates histone H3 in vitro. This chain is Aurora kinase, found in Giardia intestinalis (strain ATCC 50803 / WB clone C6) (Giardia lamblia).